Here is a 987-residue protein sequence, read N- to C-terminus: MELRVLLCWASLAAALEETLLNTKLETADLKWVTFPQVDGQWEELSGLDEEQHSVRTYEVCDVQRAPGQAHWLRTGWVPRRGAVHVYATLRFTMLECLSLPRAGRSCKETFTVFYYESDADTATALTPAWMENPYIKVDTVAAEHLTRKRPGAEATGKVNVKTLRLGPLSKAGFYLAFQDQGACMALLSLHLFYKKCAQLTVNLTRFPETVPRELVVPVAGSCVVDAVPAPGPSPSLYCREDGQWAEQPVTGCSCAPGFEAAEGNTKCRACAQGTFKPLSGEGSCQPCPANSHSNTIGSAVCQCRVGYFRARTDPRGAPCTTPPSAPRSVVSRLNGSSLHLEWSAPLESGGREDLTYALRCRECRPGGSCAPCGGDLTFDPGPRDLVEPWVVVRGLRPDFTYTFEVTALNGVSSLATGPVPFEPVNVTTDREVPPAVSDIRVTRSSPSSLSLAWAVPRAPSGAVLDYEVKYHEKGAEGPSSVRFLKTSENRAELRGLKRGASYLVQVRARSEAGYGPFGQEHHSQTQLDESEGWREQLALIAGTAVVGVVLVLVVIVVAVLCLRKQSNGREAEYSDKHGQYLIGHGTKVYIDPFTYEDPNEAVREFAKEIDVSYVKIEEVIGAGEFGEVCRGRLKAPGKKESCVAIKTLKGGYTERQRREFLSEASIMGQFEHPNIIRLEGVVTNSMPVMILTEFMENGALDSFLRLNDGQFTVIQLVGMLRGIASGMRYLAEMSYVHRDLAARNILVNSNLVCKVSDFGLSRFLEENSSDPTYTSSLGGKIPIRWTAPEAIAFRKFTSASDAWSYGIVMWEVMSFGERPYWDMSNQDVINAIEQDYRLPPPPDCPTSLHQLMLDCWQKDRNARPRFPQVVSALDKMIRNPASLKIVARENGGASHPLLDQRQPHYSAFGSVGEWLRAIKMGRYEESFAAAGFGSFELVSQISAEDLLRIGVTLAGHQKKILASVQHMKSQAKPGTPGGTGGPAPQY.

Residues 1-15 form the signal peptide; sequence MELRVLLCWASLAAA. Topologically, residues 16–539 are extracellular; sequence LEETLLNTKL…ESEGWREQLA (524 aa). Residues 17–202 enclose the Eph LBD domain; the sequence is EETLLNTKLE…FYKKCAQLTV (186 aa). 2 cysteine pairs are disulfide-bonded: C61-C184 and C97-C107. 3 N-linked (GlcNAc...) asparagine glycosylation sites follow: N203, N335, and N426. Fibronectin type-III domains are found at residues 323 to 432 and 436 to 529; these read PPSA…TDRE and AVSD…TQLD. A helical membrane pass occupies residues 540 to 560; sequence LIAGTAVVGVVLVLVVIVVAV. The Cytoplasmic portion of the chain corresponds to 561–987; sequence LCLRKQSNGR…GGTGGPAPQY (427 aa). The Protein kinase domain maps to 615–899; the sequence is VKIEEVIGAG…ENGGASHPLL (285 aa). ATP-binding positions include 621–629 and K647; that span reads IGAGEFGEV. The Proton acceptor role is filled by D740. S769, S770, S911, and S943 each carry phosphoserine. An SAM domain is found at 907–971; that stretch reads SAFGSVGEWL…LASVQHMKSQ (65 aa). The segment at 965-987 is disordered; that stretch reads VQHMKSQAKPGTPGGTGGPAPQY. Residue T976 is modified to Phosphothreonine. Over residues 976–987 the composition is skewed to gly residues; the sequence is TPGGTGGPAPQY. Positions 985–987 match the PDZ-binding motif; the sequence is PQY. Phosphotyrosine is present on Y987.

Belongs to the protein kinase superfamily. Tyr protein kinase family. Ephrin receptor subfamily. Heterotetramer upon binding of the ligand. The heterotetramer is composed of an ephrin dimer and a receptor dimer. Oligomerization is probably required to induce biological responses. Interacts with RASA1; the interaction depends on EPHB4 tyrosine-phosphorylation. In terms of processing, phosphorylated; autophosphorylation is stimulated by EFNB2. Abundantly expressed in placenta but also detected in kidney, liver, lung, pancreas, skeletal muscle and heart. Expressed in primitive and myeloid, but not lymphoid, hematopoietic cells. Also observed in cell lines derived from liver, breast, colon, lung, melanocyte and cervix.

It localises to the cell membrane. It catalyses the reaction L-tyrosyl-[protein] + ATP = O-phospho-L-tyrosyl-[protein] + ADP + H(+). Functionally, receptor tyrosine kinase which binds promiscuously transmembrane ephrin-B family ligands residing on adjacent cells, leading to contact-dependent bidirectional signaling into neighboring cells. The signaling pathway downstream of the receptor is referred to as forward signaling while the signaling pathway downstream of the ephrin ligand is referred to as reverse signaling. Together with its cognate ligand/functional ligand EFNB2 it is involved in the regulation of cell adhesion and migration, and plays a central role in heart morphogenesis, angiogenesis and blood vessel remodeling and permeability. EPHB4-mediated forward signaling controls cellular repulsion and segregation from EFNB2-expressing cells. The sequence is that of Ephrin type-B receptor 4 (EPHB4) from Homo sapiens (Human).